The following is a 463-amino-acid chain: UDP-N-acetylmuramoylalanine--D-glutamate ligase (463 aa).

An ATP-binding site is contributed by 126-132 (GSNGKST).

Belongs to the MurCDEF family.

Its subcellular location is the cytoplasm. The catalysed reaction is UDP-N-acetyl-alpha-D-muramoyl-L-alanine + D-glutamate + ATP = UDP-N-acetyl-alpha-D-muramoyl-L-alanyl-D-glutamate + ADP + phosphate + H(+). It participates in cell wall biogenesis; peptidoglycan biosynthesis. Functionally, cell wall formation. Catalyzes the addition of glutamate to the nucleotide precursor UDP-N-acetylmuramoyl-L-alanine (UMA). The sequence is that of UDP-N-acetylmuramoylalanine--D-glutamate ligase from Idiomarina loihiensis (strain ATCC BAA-735 / DSM 15497 / L2-TR).